A 374-amino-acid polypeptide reads, in one-letter code: Acid phosphatase-like protein XcAP-1 (374 aa).

Residues 1 to 17 (TTIILLIAFAAIQLSKA) form the signal peptide. V25 provides a ligand contact to serotonin. 3 cysteine pairs are disulfide-bonded: C144/C372, C165/C219, and C345/C349. Serotonin is bound by residues D245, D249, N271, and Q283.

Belongs to the histidine acid phosphatase family.

It localises to the secreted. Functionally, probably modulates blood feeding of fleas on vertebrate species by binding and sequestering different mediators involved in the host response. Binds biogenic amines: serotonin, adrenaline and noradrenaline. Binds leukotriene C4. Does not bind histamine, leukotriene B4, leukotriene D4, leukotriene E4, ADP, and stable analogs of thromboxane A2: U-46619 and cTXA2. The chain is Acid phosphatase-like protein XcAP-1 from Xenopsylla cheopis (Oriental rat flea).